The following is a 158-amino-acid chain: Small ribosomal subunit protein bS6 (158 aa).

The segment at 98–158 (EAPSAPLARR…DRDEDQNEEN (61 aa)) is disordered. Composition is skewed to basic and acidic residues over residues 106-117 (RRGEDRDRDRGF) and 127-150 (DSGRRRGADDREEYRARDEYRSDR).

Belongs to the bacterial ribosomal protein bS6 family.

Functionally, binds together with bS18 to 16S ribosomal RNA. The sequence is that of Small ribosomal subunit protein bS6 from Acidiphilium cryptum (strain JF-5).